The chain runs to 497 residues: Membrane-bound lytic murein transglycosylase F (497 aa).

Residues Met1–Glu29 form the signal peptide. Residues Lys30–Val267 form a non-LT domain region. Positions Asp268–Leu497 are LT domain. Glu314 is an active-site residue. The interval Val464–Leu497 is disordered. Positions Val486–Leu497 are enriched in low complexity.

In the N-terminal section; belongs to the bacterial solute-binding protein 3 family. This sequence in the C-terminal section; belongs to the transglycosylase Slt family.

The protein localises to the cell outer membrane. The enzyme catalyses Exolytic cleavage of the (1-&gt;4)-beta-glycosidic linkage between N-acetylmuramic acid (MurNAc) and N-acetylglucosamine (GlcNAc) residues in peptidoglycan, from either the reducing or the non-reducing ends of the peptidoglycan chains, with concomitant formation of a 1,6-anhydrobond in the MurNAc residue.. Functionally, murein-degrading enzyme that degrades murein glycan strands and insoluble, high-molecular weight murein sacculi, with the concomitant formation of a 1,6-anhydromuramoyl product. Lytic transglycosylases (LTs) play an integral role in the metabolism of the peptidoglycan (PG) sacculus. Their lytic action creates space within the PG sacculus to allow for its expansion as well as for the insertion of various structures such as secretion systems and flagella. This Pseudomonas syringae pv. tomato (strain ATCC BAA-871 / DC3000) protein is Membrane-bound lytic murein transglycosylase F.